Here is a 342-residue protein sequence, read N- to C-terminus: MNTADFDFDLPEELIAQTPLEKRDASRLLVVDKETGAFSDQHFDQIIDQLQPGDALVMNNTRVLPARLYGIKPETGGHVELLLLKNTQGDDWEVLAKPAKRLRVGAQISFGDGRLTATVIEELEHGGRIVRFSYEGIFLEVLESLGEMPLPPYIHEKLADRERYQTVYAKENGSAAAPTAGLHFTEELLEQIAAKGVKLVYLTLHVGLGTFRPVSVDSLDDHEMHSEFYSLSEEAAQTLRQVKANGGRVIAVGTTSIRTLETIGSKFQGQIQADSGWTNIFIKPGYNWKVVDAFSTNFHLPKSTLVMLVSAFAGRSLTLEAYEHAIAERYRFFSFGDAMFIK.

It belongs to the QueA family. In terms of assembly, monomer.

It localises to the cytoplasm. It carries out the reaction 7-aminomethyl-7-carbaguanosine(34) in tRNA + S-adenosyl-L-methionine = epoxyqueuosine(34) in tRNA + adenine + L-methionine + 2 H(+). Its pathway is tRNA modification; tRNA-queuosine biosynthesis. Transfers and isomerizes the ribose moiety from AdoMet to the 7-aminomethyl group of 7-deazaguanine (preQ1-tRNA) to give epoxyqueuosine (oQ-tRNA). This chain is S-adenosylmethionine:tRNA ribosyltransferase-isomerase, found in Streptococcus sanguinis (strain SK36).